We begin with the raw amino-acid sequence, 469 residues long: Mitochondrial-processing peptidase subunit beta (469 aa).

His-78 is a binding site for Zn(2+). Glu-81 functions as the Proton acceptor in the catalytic mechanism. 2 residues coordinate Zn(2+): His-82 and Glu-159.

This sequence belongs to the peptidase M16 family. As to quaternary structure, heterodimer of alpha and beta subunits, forming the mitochondrial processing protease (MPP) in which subunit alpha is involved in substrate recognition and binding and subunit beta is the catalytic subunit. mppB is probably also part of the cytochrome bc1 complex as a core I protein in the mitochondrial inner membrane. It depends on Zn(2+) as a cofactor.

It is found in the mitochondrion inner membrane. Its subcellular location is the mitochondrion matrix. It catalyses the reaction Release of N-terminal transit peptides from precursor proteins imported into the mitochondrion, typically with Arg in position P2.. Its activity is regulated as follows. Binding to alpha subunit is required for catalytic activity. Its function is as follows. Catalytic subunit of the essential mitochondrial processing protease (MPP), which cleaves the mitochondrial sequence off newly imported precursors proteins. Preferentially, cleaves after an arginine at position P2. Plays an essential role in mitochondrial biogenesis. The chain is Mitochondrial-processing peptidase subunit beta (mppB) from Dictyostelium discoideum (Social amoeba).